The following is a 491-amino-acid chain: Ketol-acid reductoisomerase (NADP(+)) (491 aa).

The KARI N-terminal Rossmann domain occupies 15 to 208; it reads AQLGKCRFMA…GGHRAGVLES (194 aa). NADP(+) contacts are provided by residues 45–48, arginine 68, arginine 76, serine 78, and 108–110; these read CGAQ and DKQ. Histidine 132 is an active-site residue. Glycine 158 is an NADP(+) binding site. KARI C-terminal knotted domains are found at residues 209–344 and 345–484; these read SFVA…NAPQ and FEGK…MTDM. Mg(2+)-binding residues include aspartate 217, glutamate 221, glutamate 389, and glutamate 393. A substrate-binding site is contributed by serine 414.

The protein belongs to the ketol-acid reductoisomerase family. The cofactor is Mg(2+).

The enzyme catalyses (2R)-2,3-dihydroxy-3-methylbutanoate + NADP(+) = (2S)-2-acetolactate + NADPH + H(+). It carries out the reaction (2R,3R)-2,3-dihydroxy-3-methylpentanoate + NADP(+) = (S)-2-ethyl-2-hydroxy-3-oxobutanoate + NADPH + H(+). It participates in amino-acid biosynthesis; L-isoleucine biosynthesis; L-isoleucine from 2-oxobutanoate: step 2/4. Its pathway is amino-acid biosynthesis; L-valine biosynthesis; L-valine from pyruvate: step 2/4. In terms of biological role, involved in the biosynthesis of branched-chain amino acids (BCAA). Catalyzes an alkyl-migration followed by a ketol-acid reduction of (S)-2-acetolactate (S2AL) to yield (R)-2,3-dihydroxy-isovalerate. In the isomerase reaction, S2AL is rearranged via a Mg-dependent methyl migration to produce 3-hydroxy-3-methyl-2-ketobutyrate (HMKB). In the reductase reaction, this 2-ketoacid undergoes a metal-dependent reduction by NADPH to yield (R)-2,3-dihydroxy-isovalerate. The chain is Ketol-acid reductoisomerase (NADP(+)) from Serratia proteamaculans (strain 568).